The primary structure comprises 248 residues: Pulmonary surfactant-associated protein A (248 aa).

Residues 1–20 form the signal peptide; it reads MWLCPLALTLTLMAASGAAC. In terms of domain architecture, Collagen-like spans 31–100; it reads GIPGTPGSHG…PGERGPPGLP (70 aa). A disordered region spans residues 33-100; that stretch reads PGTPGSHGLP…PGERGPPGLP (68 aa). Residues 42–51 are compositionally biased toward basic and acidic residues; that stretch reads PGRDGRDGVK. A compositionally biased stretch (pro residues) spans 54-65; it reads PGPPGPMGPPGD. A C-type lectin domain is found at 134 to 247; the sequence is IGGKVFSTNG…CLYNRLTICE (114 aa). 2 cysteine pairs are disulfide-bonded: C155-C246 and C224-C238. N207 carries an N-linked (GlcNAc...) asparagine glycan. The Ca(2+) site is built by E215, A217, N234, and D235.

It belongs to the SFTPA family. As to quaternary structure, oligomeric complex of 6 set of homotrimers.

It localises to the secreted. The protein resides in the extracellular space. Its subcellular location is the extracellular matrix. It is found in the surface film. Its function is as follows. In presence of calcium ions, it binds to surfactant phospholipids and contributes to lower the surface tension at the air-liquid interface in the alveoli of the mammalian lung and is essential for normal respiration. Enhances the expression of MYO18A/SP-R210 on alveolar macrophages. This is Pulmonary surfactant-associated protein A (SFTPA1) from Macaca mulatta (Rhesus macaque).